We begin with the raw amino-acid sequence, 446 residues long: NADH oxidase (446 aa).

Residues 7–11, glutamate 32, cysteine 42, valine 79, 110–113, lysine 132, and tyrosine 157 contribute to the FAD site; these read GCTHA and TTGS. Histidine 10 (proton acceptor) is an active-site residue. Cysteine 42 acts as the Redox-active in catalysis. A Cysteine sulfinic acid (-SO2H) modification is found at cysteine 42. Residues 150-165, aspartate 177, tyrosine 186, and glycine 243 each bind NAD(+); that span reads VVVVGGGYIGIELVEA. FAD-binding positions include 271-281, leucine 298, alanine 299, and threonine 300; that span reads TSNPDIFAAGD. Residue glycine 328 participates in NAD(+) binding. Phenylalanine 424 serves as a coordination point for FAD.

It belongs to the class-III pyridine nucleotide-disulfide oxidoreductase family. Homodimer. FAD serves as cofactor. Post-translationally, the N-terminus is blocked.

It catalyses the reaction 2 NADH + O2 + 2 H(+) = 2 NAD(+) + 2 H2O. Functionally, catalyzes the four-electron reduction of molecular oxygen to water. This is NADH oxidase (nox) from Enterococcus faecalis (strain ATCC 700802 / V583).